The primary structure comprises 20 residues: Unknown protein NF009 from 2D-PAGE (20 aa).

Residues 1 to 20 (ATSAAQGAALDESVRKVLKP) are disordered.

The protein is Unknown protein NF009 from 2D-PAGE of Naegleria fowleri (Brain eating amoeba).